A 540-amino-acid chain; its full sequence is Suppressor of tumorigenicity 7 protein-like (540 aa).

Helical transmembrane passes span 24–44, 68–88, 475–495, and 502–522; these read WSWTYICALWFAMVLTMVYVL, FYVALTGTSSLISGLILIFEW, LPFFILFTAGLCSFCAMLAML, and LMGVFVKAFFSTLFAPLGFFA.

The protein belongs to the ST7 family.

The protein localises to the membrane. The chain is Suppressor of tumorigenicity 7 protein-like (st7l) from Danio rerio (Zebrafish).